The primary structure comprises 275 residues: 4-hydroxy-3-methylbut-2-enyl diphosphate reductase (275 aa).

Position 12 (Cys-12) interacts with [4Fe-4S] cluster. Positions 36 and 70 each coordinate (2E)-4-hydroxy-3-methylbut-2-enyl diphosphate. Dimethylallyl diphosphate contacts are provided by His-36 and His-70. His-36 and His-70 together coordinate isopentenyl diphosphate. Cys-92 serves as a coordination point for [4Fe-4S] cluster. His-120 contributes to the (2E)-4-hydroxy-3-methylbut-2-enyl diphosphate binding site. His-120 contacts dimethylallyl diphosphate. Residue His-120 participates in isopentenyl diphosphate binding. The active-site Proton donor is the Glu-122. Thr-157 contacts (2E)-4-hydroxy-3-methylbut-2-enyl diphosphate. [4Fe-4S] cluster is bound at residue Cys-185. (2E)-4-hydroxy-3-methylbut-2-enyl diphosphate-binding residues include Ser-213, Ser-214, Asn-215, and Ser-257. Dimethylallyl diphosphate contacts are provided by Ser-213, Ser-214, Asn-215, and Ser-257. Ser-213, Ser-214, Asn-215, and Ser-257 together coordinate isopentenyl diphosphate.

Belongs to the IspH family. Requires [4Fe-4S] cluster as cofactor.

It carries out the reaction isopentenyl diphosphate + 2 oxidized [2Fe-2S]-[ferredoxin] + H2O = (2E)-4-hydroxy-3-methylbut-2-enyl diphosphate + 2 reduced [2Fe-2S]-[ferredoxin] + 2 H(+). The catalysed reaction is dimethylallyl diphosphate + 2 oxidized [2Fe-2S]-[ferredoxin] + H2O = (2E)-4-hydroxy-3-methylbut-2-enyl diphosphate + 2 reduced [2Fe-2S]-[ferredoxin] + 2 H(+). It functions in the pathway isoprenoid biosynthesis; dimethylallyl diphosphate biosynthesis; dimethylallyl diphosphate from (2E)-4-hydroxy-3-methylbutenyl diphosphate: step 1/1. The protein operates within isoprenoid biosynthesis; isopentenyl diphosphate biosynthesis via DXP pathway; isopentenyl diphosphate from 1-deoxy-D-xylulose 5-phosphate: step 6/6. Functionally, catalyzes the conversion of 1-hydroxy-2-methyl-2-(E)-butenyl 4-diphosphate (HMBPP) into a mixture of isopentenyl diphosphate (IPP) and dimethylallyl diphosphate (DMAPP). Acts in the terminal step of the DOXP/MEP pathway for isoprenoid precursor biosynthesis. The sequence is that of 4-hydroxy-3-methylbut-2-enyl diphosphate reductase from Nitratiruptor sp. (strain SB155-2).